Reading from the N-terminus, the 901-residue chain is Bifunctional protein STORR (901 aa).

The chain crosses the membrane as a helical span at residues 12 to 32; that stretch reads TSSVVALLLALVSILSSVVVL. Cys-513 is a heme binding site.

It in the N-terminal section; belongs to the cytochrome P450 family. The protein in the C-terminal section; belongs to the aldo/keto reductase family. Requires heme as cofactor.

It localises to the membrane. It carries out the reaction (R)-reticuline + NADP(+) = 1,2-dehydroreticuline + NADPH + H(+). The catalysed reaction is (S)-reticuline + reduced [NADPH--hemoprotein reductase] + O2 = 1,2-dehydroreticuline + oxidized [NADPH--hemoprotein reductase] + 2 H2O + H(+). Its pathway is alkaloid biosynthesis; morphine biosynthesis. Its function is as follows. Bifunctional protein involved in the biosynthesis of morphinan-type benzylisoquinoline alkaloids. Required for the isomerization of (S)- to (R)-reticuline. The cytochrome P450 module is responsible for the conversion of (S)-reticuline to 1,2-dehydroreticuline while the oxidoreductase module converts 1,2-dehydroreticuline to (R)-reticuline. The chain is Bifunctional protein STORR from Papaver somniferum (Opium poppy).